The primary structure comprises 757 residues: uncharacterized protein (757 aa).

The S1 motif domain maps to 640–709; the sequence is GMILEGVVSN…ARKRIALTMR (70 aa). Positions 711-741 are enriched in basic and acidic residues; that stretch reads DDEPGGAKHKMPSENRSRERTAGRKPQRNDR. Positions 711 to 757 are disordered; sequence DDEPGGAKHKMPSENRSRERTAGRKPQRNDRAPANSAMADAFAKLKR.

This is an uncharacterized protein from Neisseria meningitidis serogroup B (strain ATCC BAA-335 / MC58).